A 288-amino-acid chain; its full sequence is Sulfur carrier protein FdhD (288 aa).

Residues Met1–His23 are disordered. Catalysis depends on Cys127, which acts as the Cysteine persulfide intermediate.

The protein belongs to the FdhD family.

The protein localises to the cytoplasm. Functionally, required for formate dehydrogenase (FDH) activity. Acts as a sulfur carrier protein that transfers sulfur from IscS to the molybdenum cofactor prior to its insertion into FDH. In Cupriavidus necator (strain ATCC 17699 / DSM 428 / KCTC 22496 / NCIMB 10442 / H16 / Stanier 337) (Ralstonia eutropha), this protein is Sulfur carrier protein FdhD.